The following is a 151-amino-acid chain: Large ribosomal subunit protein bL9 (151 aa).

It belongs to the bacterial ribosomal protein bL9 family.

Its function is as follows. Binds to the 23S rRNA. The protein is Large ribosomal subunit protein bL9 of Nitrosococcus oceani (strain ATCC 19707 / BCRC 17464 / JCM 30415 / NCIMB 11848 / C-107).